Consider the following 394-residue polypeptide: Serine palmitoyltransferase (394 aa).

Residues 111–112 (GF), serine 183, histidine 211, and threonine 239 each bind pyridoxal 5'-phosphate. Lysine 242 is subject to N6-(pyridoxal phosphate)lysine.

This sequence belongs to the class-II pyridoxal-phosphate-dependent aminotransferase family. Pyridoxal 5'-phosphate is required as a cofactor.

It catalyses the reaction L-serine + hexadecanoyl-CoA + H(+) = 3-oxosphinganine + CO2 + CoA. The protein operates within lipid metabolism; sphingolipid metabolism. Functionally, involved in de novo bacterial ceramide synthesis. Catalyzes the condensation of L-serine with palmitoyl-CoA (hexadecanoyl-CoA) to produce 3-oxosphinganine. Also capable of using alanine as substrate leading to the formation of 1-deoxysphinganine (1-deoxySa). Contributes to the levels of endogenous sphingolipids in its host. The polypeptide is Serine palmitoyltransferase (Bacteroides thetaiotaomicron (strain ATCC 29148 / DSM 2079 / JCM 5827 / CCUG 10774 / NCTC 10582 / VPI-5482 / E50)).